Consider the following 583-residue polypeptide: Fumarate reductase flavoprotein subunit (583 aa).

Residues G11–A15, V35–K37, S43–G51, W155–A157, and D211 each bind FAD. Residue H44 is modified to Tele-8alpha-FAD histidine. Active-site residues include H232 and R248. Residues H353–Y354, E377, and R388–L394 contribute to the FAD site.

Belongs to the FAD-dependent oxidoreductase 2 family. FRD/SDH subfamily. In terms of assembly, part of an enzyme complex containing four subunits: a flavoprotein (FrdA), an iron-sulfur protein (FrdB), and two hydrophobic anchor proteins (FrdC and FrdD). It depends on FAD as a cofactor.

It is found in the cell membrane. The enzyme catalyses a quinone + succinate = fumarate + a quinol. It carries out the reaction a menaquinone + succinate = a menaquinol + fumarate. In Mycobacterium tuberculosis (strain CDC 1551 / Oshkosh), this protein is Fumarate reductase flavoprotein subunit (frdA).